A 123-amino-acid chain; its full sequence is Large ribosomal subunit protein uL18 (123 aa).

Belongs to the universal ribosomal protein uL18 family. Part of the 50S ribosomal subunit; part of the 5S rRNA/L5/L18/L25 subcomplex. Contacts the 5S and 23S rRNAs.

This is one of the proteins that bind and probably mediate the attachment of the 5S RNA into the large ribosomal subunit, where it forms part of the central protuberance. The sequence is that of Large ribosomal subunit protein uL18 from Chlamydia abortus (strain DSM 27085 / S26/3) (Chlamydophila abortus).